Reading from the N-terminus, the 440-residue chain is 2-alpha-hydroxytaxane 2-O-benzoyltransferase (440 aa).

Residues His158 and Asp367 each act as proton acceptor in the active site.

Belongs to the plant acyltransferase family.

It carries out the reaction 10-deacetyl-2-debenzoylbaccatin III + benzoyl-CoA = 10-deacetylbaccatin III + CoA. It functions in the pathway alkaloid biosynthesis; taxol biosynthesis; baccatin III from 10-deacetyl-2-debenzoylbaccatin III: step 1/2. In terms of biological role, catalyzes the conversion of 2-debenzoyl-7,13-diacetylbaccatin III, a semisynthetic substrate, to 7,13-diacetylbaccatin III. The chain is 2-alpha-hydroxytaxane 2-O-benzoyltransferase from Taxus cuspidata (Japanese yew).